We begin with the raw amino-acid sequence, 600 residues long: MIDLMPKKNTFLLKKKYKEDSNNSVINDLFDFFGKEFCFHQITLTGFPIIWIDKTLLIEVGKFLYHLSQPYIMLYDLHGVDERIRLHREDLPKADFSVFYHLISIERNSDIMIKVPLLENDLILPTFTGLFPNANWYERETWDMFGIIFNNHPNLTRIIMPSTWKGHPLRKNYSARATEYEPFFLNEQKEDLEMEGLKFKPELWGMKRKNDNVEFMFLNLGPNHPSAHGAFRIVLQLDGENIVDCVPDIGYHHRGAEKMAERQSWHSYIPYTDRIEYLGGCVNELPYVLAVEKLANISVPEKAEVIRVMMSELFRINSHLLYISTFIQDVGCMTPVFFAFTDRQKIYDLIEAITGARMHPAWFRIGGVANDLPQGWNILLKEFLDWMPKRLKYYINTALKNSILIHRSKGIAEYNKKEALQWGVTGAGLRATGLNFDVRKWRPYSGYQNYTFEVPVGSGISDCYSRVMIKVEEIYQSLFILKQCLCNMPSGPFKSEDSLTTPPSKECVLQNIETMITHFLQVSWGPVIPENESFQMIEATKGINSYYLISDGGTMSYRTRIRTPSFPHLQQIPSVIRGSLISDLIVYLGSIDFVMSDVDR.

The NADH dehydrogenase I subunit C stretch occupies residues methionine 1 to glutamate 190. Residues glutamate 214–arginine 600 are NADH dehydrogenase I subunit D.

The protein in the N-terminal section; belongs to the complex I 30 kDa subunit family. This sequence in the C-terminal section; belongs to the complex I 49 kDa subunit family. In terms of assembly, NDH-1 is composed of 13 different subunits. Subunits NuoB, CD, E, F, and G constitute the peripheral sector of the complex.

It localises to the cell membrane. The enzyme catalyses a quinone + NADH + 5 H(+)(in) = a quinol + NAD(+) + 4 H(+)(out). Functionally, NDH-1 shuttles electrons from NADH, via FMN and iron-sulfur (Fe-S) centers, to quinones in the respiratory chain. The immediate electron acceptor for the enzyme in this species is believed to be ubiquinone. Couples the redox reaction to proton translocation (for every two electrons transferred, four hydrogen ions are translocated across the cytoplasmic membrane), and thus conserves the redox energy in a proton gradient. This Buchnera aphidicola subsp. Acyrthosiphon pisum (strain Tuc7) protein is NADH-quinone oxidoreductase subunit C/D.